Reading from the N-terminus, the 435-residue chain is 3-phosphoshikimate 1-carboxyvinyltransferase (435 aa).

3 residues coordinate 3-phosphoshikimate: K22, S23, and R27. K22 lines the phosphoenolpyruvate pocket. The phosphoenolpyruvate site is built by G94 and R122. Residues S166, Q168, D314, and K341 each coordinate 3-phosphoshikimate. Position 168 (Q168) interacts with phosphoenolpyruvate. The active-site Proton acceptor is D314. Phosphoenolpyruvate-binding residues include R345 and R388.

Belongs to the EPSP synthase family. Monomer.

It localises to the cytoplasm. It carries out the reaction 3-phosphoshikimate + phosphoenolpyruvate = 5-O-(1-carboxyvinyl)-3-phosphoshikimate + phosphate. It participates in metabolic intermediate biosynthesis; chorismate biosynthesis; chorismate from D-erythrose 4-phosphate and phosphoenolpyruvate: step 6/7. Functionally, catalyzes the transfer of the enolpyruvyl moiety of phosphoenolpyruvate (PEP) to the 5-hydroxyl of shikimate-3-phosphate (S3P) to produce enolpyruvyl shikimate-3-phosphate and inorganic phosphate. The sequence is that of 3-phosphoshikimate 1-carboxyvinyltransferase from Ruthia magnifica subsp. Calyptogena magnifica.